Here is a 443-residue protein sequence, read N- to C-terminus: tRNA modification GTPase MnmE (443 aa).

Residues Arg23, Glu80, and Lys120 each coordinate (6S)-5-formyl-5,6,7,8-tetrahydrofolate. One can recognise a TrmE-type G domain in the interval 217 to 367 (GFEVVILGAP…LLAEIGRRAA (151 aa)). GTP contacts are provided by residues 227-232 (NAGKSS), 246-252 (TDEPGTT), and 271-274 (DTAG). 2 residues coordinate Mg(2+): Ser231 and Thr252. Position 443 (Lys443) interacts with (6S)-5-formyl-5,6,7,8-tetrahydrofolate.

It belongs to the TRAFAC class TrmE-Era-EngA-EngB-Septin-like GTPase superfamily. TrmE GTPase family. As to quaternary structure, homodimer. Heterotetramer of two MnmE and two MnmG subunits. It depends on K(+) as a cofactor.

The protein localises to the cytoplasm. In terms of biological role, exhibits a very high intrinsic GTPase hydrolysis rate. Involved in the addition of a carboxymethylaminomethyl (cmnm) group at the wobble position (U34) of certain tRNAs, forming tRNA-cmnm(5)s(2)U34. The chain is tRNA modification GTPase MnmE from Mesorhizobium japonicum (strain LMG 29417 / CECT 9101 / MAFF 303099) (Mesorhizobium loti (strain MAFF 303099)).